The chain runs to 362 residues: Cobalt-precorrin-5B C(1)-methyltransferase (362 aa).

This sequence belongs to the CbiD family.

It carries out the reaction Co-precorrin-5B + S-adenosyl-L-methionine = Co-precorrin-6A + S-adenosyl-L-homocysteine. It participates in cofactor biosynthesis; adenosylcobalamin biosynthesis; cob(II)yrinate a,c-diamide from sirohydrochlorin (anaerobic route): step 6/10. In terms of biological role, catalyzes the methylation of C-1 in cobalt-precorrin-5B to form cobalt-precorrin-6A. The protein is Cobalt-precorrin-5B C(1)-methyltransferase of Burkholderia multivorans (strain ATCC 17616 / 249).